We begin with the raw amino-acid sequence, 157 residues long: UPF0756 membrane protein ABC2716 (157 aa).

4 consecutive transmembrane segments (helical) span residues 8–28 (FLLL…IIAI), 54–74 (LGVT…DIGF), 84–104 (LYAW…ASGI), and 117–137 (LVLG…GPLI).

The protein belongs to the UPF0756 family.

It localises to the cell membrane. The chain is UPF0756 membrane protein ABC2716 from Shouchella clausii (strain KSM-K16) (Alkalihalobacillus clausii).